Consider the following 386-residue polypeptide: MNQDDFRKLLATPKAETSQLKNFSSNKSQRLVFGRKHKTAKLEAPRALIKRKQLSHSTSSDITRHSNAKNSGKDTQFYEEPSSKQDIELHKLHEKLRNGQITTKEYSEKSKELGGDLNTTHLVRGLDRKLLEKVRSNELALDDSLLSSSEKEVDEEADKLLEKVAEESSHPESVSILEEKKKIPLYPNGQPKYRKILENGKKVKYLLDENGEILKRLVKKEKKLKNDNERLENEHRTEKLNVNANSLGKSFVKHDIPLPPVDLKLDIFEEVGEYDPFHENDKEPAELKAKDAFQLKGHHELDAPYHKKVFDTNQYSDLKPTNFMSQIHRLAKVQERKEEEERKKGKDGQIVDAGFGLVLSKDDTADIHELGESDDDDNVKRRKTKG.

Disordered stretches follow at residues 1–28 (MNQD…SNKS), 46–85 (RALI…SSKQ), and 366–386 (DIHE…KTKG). Residues 15-28 (AETSQLKNFSSNKS) are compositionally biased toward polar residues.

It is found in the nucleus. Its function is as follows. Required for meiotic chromosome segregation. This Schizosaccharomyces pombe (strain 972 / ATCC 24843) (Fission yeast) protein is Meiotic chromosome segregation protein C1539.02.